A 77-amino-acid polypeptide reads, in one-letter code: Putative antitoxin VapB3 (77 aa).

The stretch at 10–60 (RRGLKKELEELGINYAEAVRKFLEELVARERRRRALERARALREELRKKGA) forms a coiled coil.

Forms a complex with putative toxin VapC3, possibly VapB(2)-VapC(2).

Its function is as follows. Antitoxin component of a type II toxin-antitoxin (TA) system. The protein is Putative antitoxin VapB3 (vAPb3) of Pyrobaculum aerophilum (strain ATCC 51768 / DSM 7523 / JCM 9630 / CIP 104966 / NBRC 100827 / IM2).